The primary structure comprises 396 residues: 1-deoxy-D-xylulose 5-phosphate reductoisomerase (396 aa).

NADPH-binding residues include Thr-15, Gly-16, Ser-17, Ile-18, Gly-41, and Asn-129. A 1-deoxy-D-xylulose 5-phosphate-binding site is contributed by Lys-130. NADPH is bound at residue Glu-131. Residue Asp-155 participates in Mn(2+) binding. 1-deoxy-D-xylulose 5-phosphate contacts are provided by Ser-156, Glu-157, Ser-182, and His-205. Mn(2+) is bound at residue Glu-157. Residue Gly-211 coordinates NADPH. The 1-deoxy-D-xylulose 5-phosphate site is built by Ser-218, Asn-223, Lys-224, and Glu-227. Glu-227 lines the Mn(2+) pocket.

It belongs to the DXR family. The cofactor is Mg(2+). Requires Mn(2+) as cofactor.

The enzyme catalyses 2-C-methyl-D-erythritol 4-phosphate + NADP(+) = 1-deoxy-D-xylulose 5-phosphate + NADPH + H(+). The protein operates within isoprenoid biosynthesis; isopentenyl diphosphate biosynthesis via DXP pathway; isopentenyl diphosphate from 1-deoxy-D-xylulose 5-phosphate: step 1/6. In terms of biological role, catalyzes the NADPH-dependent rearrangement and reduction of 1-deoxy-D-xylulose-5-phosphate (DXP) to 2-C-methyl-D-erythritol 4-phosphate (MEP). This Xanthomonas campestris pv. campestris (strain B100) protein is 1-deoxy-D-xylulose 5-phosphate reductoisomerase.